A 235-amino-acid polypeptide reads, in one-letter code: Sugar fermentation stimulation protein homolog (235 aa).

It belongs to the SfsA family.

This is Sugar fermentation stimulation protein homolog from Photorhabdus laumondii subsp. laumondii (strain DSM 15139 / CIP 105565 / TT01) (Photorhabdus luminescens subsp. laumondii).